A 702-amino-acid polypeptide reads, in one-letter code: Ribosomal RNA large subunit methyltransferase K/L (702 aa).

Residues 43-154 (LIYQSLMWSR…KETASIALDL (112 aa)) form the THUMP domain.

Belongs to the methyltransferase superfamily. RlmKL family.

It is found in the cytoplasm. The enzyme catalyses guanosine(2445) in 23S rRNA + S-adenosyl-L-methionine = N(2)-methylguanosine(2445) in 23S rRNA + S-adenosyl-L-homocysteine + H(+). The catalysed reaction is guanosine(2069) in 23S rRNA + S-adenosyl-L-methionine = N(2)-methylguanosine(2069) in 23S rRNA + S-adenosyl-L-homocysteine + H(+). Specifically methylates the guanine in position 2445 (m2G2445) and the guanine in position 2069 (m7G2069) of 23S rRNA. The protein is Ribosomal RNA large subunit methyltransferase K/L of Salmonella arizonae (strain ATCC BAA-731 / CDC346-86 / RSK2980).